A 246-amino-acid polypeptide reads, in one-letter code: Nodulin-25 (246 aa).

The signal sequence occupies residues 1–24 (MVYSNTYMLLGLGVFVLLSSHVLA).

Its subcellular location is the symbiosome. It localises to the peribacteroid space. In terms of biological role, involved in the development and function of nodules. It might participate in the biological process of symbiotic nitrogen fixation. This Medicago sativa (Alfalfa) protein is Nodulin-25 (NMS-25).